Here is a 1214-residue protein sequence, read N- to C-terminus: Inner capsid protein VP3 (1214 aa).

Residues Met-1–Thr-80 form a disordered region. Residues Lys-8–Asp-18 show a composition bias toward polar residues. Low complexity predominate over residues Pro-28–Ala-51. Residues Tyr-117–His-140 form a C2H2-type zinc finger.

The protein belongs to the turreted BTV-fold inner capsid family. As to quaternary structure, homodecamer; each decamer is made up of two conformers of VP2, called VP2A and VP2B. 12 homodecamers assemble to form an icosahedral capsid. Interacts with VP6.

The protein localises to the virion. Functionally, inner capsid protein that self-assembles to form an icosahedral capsid with a T=2 symmetry, which consists of 120 copies of VP2, with channels at each of its five-fold vertices. This capsid constitutes the innermost concentric layer of the viral mature particle. The chain is Inner capsid protein VP3 (S3) from Notemigonus crysoleucas (Golden shiner).